A 120-amino-acid polypeptide reads, in one-letter code: Large ribosomal subunit protein uL18 (120 aa).

It belongs to the universal ribosomal protein uL18 family. Part of the 50S ribosomal subunit; part of the 5S rRNA/L5/L18/L25 subcomplex. Contacts the 5S and 23S rRNAs.

In terms of biological role, this is one of the proteins that bind and probably mediate the attachment of the 5S RNA into the large ribosomal subunit, where it forms part of the central protuberance. In Hyphomonas neptunium (strain ATCC 15444), this protein is Large ribosomal subunit protein uL18.